Here is a 325-residue protein sequence, read N- to C-terminus: Peroxidase 47 (325 aa).

Residues 1 to 36 (MLTRFKKQNNKMVRANIVSMVLLMHAIVGFPFHARG) form the signal peptide. 4 disulfide bridges follow: Cys46-Cys125, Cys79-Cys84, Cys131-Cys321, and Cys209-Cys235. Catalysis depends on His77, which acts as the Proton acceptor. Ca(2+) contacts are provided by Asp78, Gly83, Asp85, and Ser87. Pro172 contributes to the substrate binding site. Asn177 carries an N-linked (GlcNAc...) asparagine glycan. His202 serves as a coordination point for heme b. Thr203 contributes to the Ca(2+) binding site. Residues Asp246, Thr248, and Asp253 each contribute to the Ca(2+) site.

The protein belongs to the peroxidase family. Classical plant (class III) peroxidase subfamily. Requires heme b as cofactor. It depends on Ca(2+) as a cofactor.

It is found in the secreted. The enzyme catalyses 2 a phenolic donor + H2O2 = 2 a phenolic radical donor + 2 H2O. In terms of biological role, removal of H(2)O(2), oxidation of toxic reductants, biosynthesis and degradation of lignin, suberization, auxin catabolism, response to environmental stresses such as wounding, pathogen attack and oxidative stress. These functions might be dependent on each isozyme/isoform in each plant tissue. The polypeptide is Peroxidase 47 (PER47) (Arabidopsis thaliana (Mouse-ear cress)).